The chain runs to 730 residues: Polyphosphate kinase (730 aa).

The span at 1 to 21 shows a compositional bias: basic and acidic residues; sequence MMRHDRNVTEIDAETRPDENL. Positions 1-39 are disordered; sequence MMRHDRNVTEIDAETRPDENLWHSGDSAVGAPPAATPAA. ATP is bound at residue Asn-86. Mg(2+) contacts are provided by Arg-423 and Arg-453. His-483 functions as the Phosphohistidine intermediate in the catalytic mechanism. 3 residues coordinate ATP: Tyr-516, Arg-612, and His-640.

It belongs to the polyphosphate kinase 1 (PPK1) family. The cofactor is Mg(2+). Post-translationally, an intermediate of this reaction is the autophosphorylated ppk in which a phosphate is covalently linked to a histidine residue through a N-P bond.

It carries out the reaction [phosphate](n) + ATP = [phosphate](n+1) + ADP. Its function is as follows. Catalyzes the reversible transfer of the terminal phosphate of ATP to form a long-chain polyphosphate (polyP). In Mycolicibacterium paratuberculosis (strain ATCC BAA-968 / K-10) (Mycobacterium paratuberculosis), this protein is Polyphosphate kinase.